Consider the following 339-residue polypeptide: Phosphoribosylformylglycinamidine cyclo-ligase (339 aa).

The protein belongs to the AIR synthase family.

The protein localises to the cytoplasm. The enzyme catalyses 2-formamido-N(1)-(5-O-phospho-beta-D-ribosyl)acetamidine + ATP = 5-amino-1-(5-phospho-beta-D-ribosyl)imidazole + ADP + phosphate + H(+). The protein operates within purine metabolism; IMP biosynthesis via de novo pathway; 5-amino-1-(5-phospho-D-ribosyl)imidazole from N(2)-formyl-N(1)-(5-phospho-D-ribosyl)glycinamide: step 2/2. The sequence is that of Phosphoribosylformylglycinamidine cyclo-ligase from Methanobrevibacter smithii (strain ATCC 35061 / DSM 861 / OCM 144 / PS).